We begin with the raw amino-acid sequence, 130 residues long: Large ribosomal subunit protein bL12 (130 aa).

It belongs to the bacterial ribosomal protein bL12 family. Homodimer. Part of the ribosomal stalk of the 50S ribosomal subunit. Forms a multimeric L10(L12)X complex, where L10 forms an elongated spine to which 2 to 4 L12 dimers bind in a sequential fashion. Binds GTP-bound translation factors.

Its function is as follows. Forms part of the ribosomal stalk which helps the ribosome interact with GTP-bound translation factors. Is thus essential for accurate translation. The protein is Large ribosomal subunit protein bL12 of Yersinia pestis bv. Antiqua (strain Angola).